The primary structure comprises 205 residues: uncharacterized protein (205 aa).

A signal peptide spans 1–18; the sequence is MKASLALLSLLTAFTSHS.

This is an uncharacterized protein from Escherichia coli (strain K12).